The primary structure comprises 390 residues: Pepsin B (390 aa).

The signal sequence occupies residues 1-16 (MKIQVLVLVCLHLSEG). Positions 17 to 59 (VERIILKKGKSIRQVMEERGVLETFLRNHPKVDPAAKYLFNND) are cleaved as a propeptide — activation peptide. One can recognise a Peptidase A1 domain in the interval 74–387 (YFGEISIGTP…DMAANRVGFA (314 aa)). Residue aspartate 92 is part of the active site. Cystine bridges form between cysteine 105-cysteine 110 and cysteine 269-cysteine 273. Aspartate 278 is a catalytic residue. Cysteine 312 and cysteine 345 form a disulfide bridge.

It belongs to the peptidase A1 family.

The protein resides in the secreted. It carries out the reaction Degradation of gelatin, little activity on hemoglobin. Specificity on B chain of insulin more restricted than that of pepsin A. Does not cleave 1-Phe-|-Val-2, 4-Gln-|-His-5 or 23-Gly-|-Phe-24.. Hydrolyzes various peptides including beta-endorphin, insulin B chain, dynorphin A, and neurokinin A, with high specificity for the cleavage of the Phe-Xaa bonds. This Canis lupus familiaris (Dog) protein is Pepsin B (PGB).